Reading from the N-terminus, the 181-residue chain is tRNA (cytidine(56)-2'-O)-methyltransferase (181 aa).

Residues leucine 88, 115 to 119, and 133 to 140 contribute to the S-adenosyl-L-methionine site; these read GGEKV and IGNQPHSE.

This sequence belongs to the aTrm56 family. In terms of assembly, homodimer.

It is found in the cytoplasm. It catalyses the reaction cytidine(56) in tRNA + S-adenosyl-L-methionine = 2'-O-methylcytidine(56) in tRNA + S-adenosyl-L-homocysteine + H(+). Specifically catalyzes the AdoMet-dependent 2'-O-ribose methylation of cytidine at position 56 in tRNAs. This Thermofilum pendens (strain DSM 2475 / Hrk 5) protein is tRNA (cytidine(56)-2'-O)-methyltransferase.